The primary structure comprises 1637 residues: Kinesin-like protein KIF21B (1637 aa).

The 363-residue stretch at 8–370 folds into the Kinesin motor domain; the sequence is CVKVAVRIRP…LKYANRARNI (363 aa). 87-94 contacts ATP; it reads GQTGAGKT. Coiled coils occupy residues 376-604 and 631-824; these read VNQD…EEEG and NFQA…ALRR. The interaction with TRIM3 stretch occupies residues 400-1099; the sequence is MEYKAGKRVI…LQALIYNVQQ (700 aa). Over residues 509-533 the composition is skewed to low complexity; the sequence is ASARSPYSLGASPAAPAFGGSPASS. Disordered stretches follow at residues 509-538 and 552-628; these read ASAR…EDAS and KKKE…PEEK. Acidic residues predominate over residues 578 to 627; it reads NSEETDENEAEEEEEERDESGCEEEEGREDEDEDSGSEESLVDSDSDPEE. Residue S579 is modified to Phosphoserine. Phosphothreonine is present on T582. Disordered regions lie at residues 830 to 865 and 880 to 906; these read SERV…GARS and FLGD…GASQ. A compositionally biased stretch (low complexity) spans 846 to 865; the sequence is SGAEVSASTTSSEAESGARS. Residues 928–1016 adopt a coiled-coil conformation; it reads MQRMTIVNLE…EETKEELDST (89 aa). Phosphoserine occurs at positions 1149, 1167, and 1215. A compositionally biased stretch (polar residues) spans 1194-1217; it reads RTVSLPTRGSTFPRQSRATETSPL. Residues 1194-1251 are disordered; it reads RTVSLPTRGSTFPRQSRATETSPLTRRKSYDRGQPIRSTDVGFTPPSSPPTRPRNDRN. T1237 bears the Phosphothreonine mark. Position 1241 is a phosphoserine (S1241). 7 WD repeats span residues 1306–1343, 1346–1384, 1410–1448, 1451–1493, 1502–1539, 1543–1582, and 1585–1622; these read GHTK…EIAA, GHPN…KCIR, QGEH…PVGK, GHIG…TGTI, PHYD…LIQQ, AHKD…PIGE, and GHDS…TPCL.

It belongs to the TRAFAC class myosin-kinesin ATPase superfamily. Kinesin family. Interacts with TRIM3; the interaction positively affects motility of KIF21B. Interacts with GABARAP and GABA(A) receptor subunits: GABRG2, GABRA1 and GABRA2. May interact with GABA(A) receptor subunits: GABRB2 and GABRB3.

The protein localises to the cytoplasm. The protein resides in the cytoskeleton. It localises to the cell projection. It is found in the dendrite. Its subcellular location is the growth cone. The protein localises to the axon. The protein resides in the cytoplasmic vesicle. Functionally, plus-end directed microtubule-dependent motor protein which displays processive activity. Is involved in regulation of microtubule dynamics, synapse function and neuronal morphology, including dendritic tree branching and spine formation. Plays a role in lerning and memory. Involved in delivery of gamma-aminobutyric acid (GABA(A)) receptor to cell surface. This Homo sapiens (Human) protein is Kinesin-like protein KIF21B (KIF21B).